The following is a 794-amino-acid chain: Hyaluronan mediated motility receptor (794 aa).

Residues 1-87 (MSFPKAPLKR…SQKNDKDVKR (87 aa)) are disordered. Phosphoserine is present on serine 20. Positions 74-87 (SKKDSQKNDKDVKR) are enriched in basic and acidic residues. N-linked (GlcNAc...) asparagine glycosylation is found at asparagine 134, asparagine 279, asparagine 446, asparagine 467, asparagine 488, asparagine 509, asparagine 530, asparagine 561, and asparagine 601. The required for interaction with FAM83D stretch occupies residues 365-630 (EEMTSEKNVF…ITDLKNQLRQ (266 aa)). 5 consecutive repeat copies span residues 442 to 462 (QEKY…LESV), 463 to 483 (QEKY…LESE), 484 to 504 (QEKY…LESE), 505 to 525 (QEKY…LESV), and 526 to 546 (QEKY…LESY). The 5 X 21 AA tandem repeats stretch occupies residues 442 to 546 (QEKYNDTAQS…RDVTAQLESY (105 aa)). 2 hyaluronic acid-binding regions span residues 719–729 (KQKIKHVVKLK) and 741–750 (KLRSQLVKRK). Phosphothreonine is present on threonine 784.

As to quaternary structure, interacts with ANKRD26. Interacts with DYNLL1. Interacts with FAM83D/CHICA. As to expression, ubiquitously expressed.

The protein resides in the cell surface. The protein localises to the cytoplasm. Its subcellular location is the cytoskeleton. It is found in the spindle. In terms of biological role, receptor for hyaluronic acid (HA). Involved in cell motility. When hyaluronan binds to HMMR, the phosphorylation of a number of proteins, including the PTK2/FAK1 occurs. May also be involved in cellular transformation and metastasis formation, and in regulating extracellular-regulated kinase (ERK) activity. May act as a regulator of adipogenesis. The chain is Hyaluronan mediated motility receptor (Hmmr) from Mus musculus (Mouse).